The sequence spans 330 residues: Beta-hexosaminidase (330 aa).

Substrate contacts are provided by residues D62, R70, R133, and 163–164 (KH). The active-site Proton donor/acceptor is H176. D246 (nucleophile) is an active-site residue.

The protein belongs to the glycosyl hydrolase 3 family. NagZ subfamily.

The protein localises to the cytoplasm. The enzyme catalyses Hydrolysis of terminal non-reducing N-acetyl-D-hexosamine residues in N-acetyl-beta-D-hexosaminides.. It participates in cell wall biogenesis; peptidoglycan recycling. Its function is as follows. Plays a role in peptidoglycan recycling by cleaving the terminal beta-1,4-linked N-acetylglucosamine (GlcNAc) from peptide-linked peptidoglycan fragments, giving rise to free GlcNAc, anhydro-N-acetylmuramic acid and anhydro-N-acetylmuramic acid-linked peptides. This chain is Beta-hexosaminidase, found in Idiomarina loihiensis (strain ATCC BAA-735 / DSM 15497 / L2-TR).